The sequence spans 571 residues: FAD-linked oxidoreductase patO (571 aa).

A signal peptide spans 1–23; that stretch reads MRLHQSPPRLLVCILSVLQVSAG. Residues Asn47, Asn101, Asn125, Asn179, Asn341, Asn374, Asn380, Asn421, Asn445, and Asn480 are each glycosylated (N-linked (GlcNAc...) asparagine). The FAD-binding PCMH-type domain occupies 115-294; the sequence is TLGAMVRYAV…YAVTVKTFPD (180 aa).

It belongs to the oxygen-dependent FAD-linked oxidoreductase family. FAD serves as cofactor.

The protein resides in the vacuole lumen. The protein operates within mycotoxin biosynthesis; patulin biosynthesis. Functionally, FAD-linked oxidoreductase; part of the gene cluster that mediates the biosynthesis of patulin, an acetate-derived tetraketide mycotoxin produced by several fungal species that shows antimicrobial properties against several bacteria. PatO acts with patJ in the vacuole to convert gentisyl alcohol to isoepoxydon. The pathway begins with the synthesis of 6-methylsalicylic acid by the polyketide synthase (PKS) patK via condensation of acetate and malonate units. The 6-methylsalicylic acid decarboxylase patG then catalyzes the decarboxylation of 6-methylsalicylic acid to yield m-cresol (also known as 3-methylphenol). These first reactions occur in the cytosol. The intermediate m-cresol is then transported into the endoplasmic reticulum where the cytochrome P450 monooxygenase patH converts it to m-hydroxybenzyl alcohol, which is further converted to gentisyl alcohol by the cytochrome P450 monooxygenase patI. The oxidoreductases patJ and patO further convert gentisyl alcohol to isoepoxydon in the vacuole. PatN catalyzes then the transformation of isoepoxydon into phyllostine. The cluster protein patF is responsible for the conversion from phyllostine to neopatulin whereas the alcohol dehydrogenase patD converts neopatulin to E-ascladiol. The steps between isoepoxydon and E-ascladiol occur in the cytosol, and E-ascladiol is probably secreted to the extracellular space by one of the cluster-specific transporters patC or patM. Finally, the secreted patulin synthase patE catalyzes the conversion of E-ascladiol to patulin. This Penicillium expansum (Blue mold rot fungus) protein is FAD-linked oxidoreductase patO.